The chain runs to 149 residues: SsrA-binding protein (149 aa).

Residues 121–149 are disordered; that stretch reads GKGEHDKRDTIKDREGKREVERAMKSRSR.

It belongs to the SmpB family.

It localises to the cytoplasm. Its function is as follows. Required for rescue of stalled ribosomes mediated by trans-translation. Binds to transfer-messenger RNA (tmRNA), required for stable association of tmRNA with ribosomes. tmRNA and SmpB together mimic tRNA shape, replacing the anticodon stem-loop with SmpB. tmRNA is encoded by the ssrA gene; the 2 termini fold to resemble tRNA(Ala) and it encodes a 'tag peptide', a short internal open reading frame. During trans-translation Ala-aminoacylated tmRNA acts like a tRNA, entering the A-site of stalled ribosomes, displacing the stalled mRNA. The ribosome then switches to translate the ORF on the tmRNA; the nascent peptide is terminated with the 'tag peptide' encoded by the tmRNA and targeted for degradation. The ribosome is freed to recommence translation, which seems to be the essential function of trans-translation. In Polaromonas sp. (strain JS666 / ATCC BAA-500), this protein is SsrA-binding protein.